Consider the following 84-residue polypeptide: Dolichol phosphate-mannose biosynthesis regulatory protein (84 aa).

Helical transmembrane passes span 11 to 31 and 49 to 69; these read FGLV…VILL and YAVL…GLFI.

This sequence belongs to the DPM2 family. As to quaternary structure, component of the dolichol-phosphate mannose (DPM) synthase complex composed of DPM1, DPM2 and DPM3; in the complex interacts directly with DPM3. Component of the glycosylphosphatidylinositol-N-acetylglucosaminyltransferase (GPI-GnT) complex composed at least by PIGA, PIGC, PIGH, PIGP, PIGQ, PIGY and DPM2. Interacts with PIGA, PIGC and PIGQ.

The protein resides in the endoplasmic reticulum membrane. Its pathway is protein modification; protein glycosylation. In terms of biological role, regulates the biosynthesis of dolichol phosphate-mannose. Regulatory subunit of the dolichol-phosphate mannose (DPM) synthase complex; essential for the ER localization and stable expression of DPM1. Part of the glycosylphosphatidylinositol-N-acetylglucosaminyltransferase (GPI-GnT) complex that catalyzes the transfer of N-acetylglucosamine from UDP-N-acetylglucosamine to phosphatidylinositol and participates in the first step of GPI biosynthesis. May act by regulating the GPI-GNT complex. The protein is Dolichol phosphate-mannose biosynthesis regulatory protein of Cricetulus griseus (Chinese hamster).